A 504-amino-acid polypeptide reads, in one-letter code: Maturase K (504 aa).

The protein belongs to the intron maturase 2 family. MatK subfamily.

It localises to the plastid. It is found in the chloroplast. Its function is as follows. Usually encoded in the trnK tRNA gene intron. Probably assists in splicing its own and other chloroplast group II introns. The chain is Maturase K from Cucumis sativus (Cucumber).